We begin with the raw amino-acid sequence, 354 residues long: Selenide, water dikinase (354 aa).

Residue selenocysteine 21 is part of the active site. Selenocysteine 21 is a non-standard amino acid (selenocysteine). ATP contacts are provided by residues lysine 24 and 51–53; that span reads TSD. Aspartate 54 is a binding site for Mg(2+). ATP is bound by residues aspartate 71, aspartate 94, and 141–143; that span reads GHT. Aspartate 94 contributes to the Mg(2+) binding site. A Mg(2+)-binding site is contributed by aspartate 229.

Belongs to the selenophosphate synthase 1 family. Class I subfamily. As to quaternary structure, homodimer. Requires Mg(2+) as cofactor.

The catalysed reaction is hydrogenselenide + ATP + H2O = selenophosphate + AMP + phosphate + 2 H(+). In terms of biological role, synthesizes selenophosphate from selenide and ATP. This is Selenide, water dikinase from Treponema denticola (strain ATCC 35405 / DSM 14222 / CIP 103919 / JCM 8153 / KCTC 15104).